Consider the following 468-residue polypeptide: E3 ubiquitin-protein ligase TRIM11 (468 aa).

The RING-type zinc finger occupies 16 to 57 (CAICLDYFTDPVMTDCGHNFCRECIRRCWGQPEGPYACPECR). Ser85 is subject to Phosphoserine. Residues 87 to 128 (VPQGVCAAHREPLAAFCGDELRLLCAACERSGEHWAHRVRPL) form a B box-type zinc finger. Positions 92, 95, 114, and 120 each coordinate Zn(2+). The stretch at 128-233 (LQDAAEDLKS…QLAELITELE (106 aa)) forms a coiled coil. Positions 268-461 (EMRTVCRVPG…MTICRLKGGP (194 aa)) constitute a B30.2/SPRY domain. Lys458 participates in a covalent cross-link: Glycyl lysine isopeptide (Lys-Gly) (interchain with G-Cter in ubiquitin).

It belongs to the TRIM/RBCC family. As to quaternary structure, binds cytoplasmic tail of integrin alpha-1. Interacts with the HN peptide. Interacts with PHOX2B. Interacts (when autoubiquitinated) with SQSTM1/p62; promoting AIM2 recruitment to autophagosomes. Interacts with AIM2; promoting its autophagy-dependent degradation. Autoubiquitinated upon DNA stimulation; autoubiquitination promotes interaction with SQSTM1/p62 and recruitment of AIM2 to autophagosomes.

The protein localises to the cytoplasm. The protein resides in the nucleus. It carries out the reaction S-ubiquitinyl-[E2 ubiquitin-conjugating enzyme]-L-cysteine + [acceptor protein]-L-lysine = [E2 ubiquitin-conjugating enzyme]-L-cysteine + N(6)-ubiquitinyl-[acceptor protein]-L-lysine.. It participates in protein modification; protein ubiquitination. Functionally, E3 ubiquitin-protein ligase that promotes the degradation of insoluble ubiquitinated proteins, including insoluble PAX6, poly-Gln repeat expanded HTT and poly-Ala repeat expanded ARX. Mediates PAX6 ubiquitination leading to proteasomal degradation, thereby modulating cortical neurogenesis. May also inhibit PAX6 transcriptional activity, possibly in part by preventing the binding of PAX6 to its consensus sequences. May contribute to the regulation of the intracellular level of HN (humanin) or HN-containing proteins through the proteasomal degradation pathway. Mediates MED15 ubiquitination leading to proteasomal degradation. May contribute to the innate restriction of retroviruses. Upon overexpression, reduces HIV-1 and murine leukemia virus infectivity, by suppressing viral gene expression. Antiviral activity depends on a functional E3 ubiquitin-protein ligase domain. May regulate TRIM5 turnover via the proteasome pathway, thus counteracting the TRIM5-mediated cross-species restriction of retroviral infection at early stages of the retroviral life cycle. Acts as an inhibitor of the AIM2 inflammasome by promoting autophagy-dependent degradation of AIM2. Mechanistically, undergoes autoubiquitination upon DNA stimulation, promoting interaction with AIM2 and SQSTM1/p62, leading to AIM2 recruitment to autophagosomes. The polypeptide is E3 ubiquitin-protein ligase TRIM11 (TRIM11) (Bos taurus (Bovine)).